The chain runs to 620 residues: Chaperone protein HtpG (620 aa).

The a; substrate-binding stretch occupies residues 1–339 (MAKHQFQTEI…SEDLPLNVSR (339 aa)). The segment at 340–546 (ELLQENRILA…ASDPMAGMAA (207 aa)) is b. A c region spans residues 547–620 (MFAQMGQEMP…RVASLATKAL (74 aa)).

The protein belongs to the heat shock protein 90 family. In terms of assembly, homodimer.

Its subcellular location is the cytoplasm. Molecular chaperone. Has ATPase activity. The chain is Chaperone protein HtpG from Sulfurovum sp. (strain NBC37-1).